The following is a 711-amino-acid chain: Protein mono-ADP-ribosyltransferase PARP12 (711 aa).

3 C3H1-type zinc fingers span residues 103-128 (LCKF…HNLK), 164-188 (ICLH…IKLH), and 189-211 (ICQY…HEFT). Residues 247 to 279 (SALSKVSPSPAGPQGSSERKDSSGPVSPGTPSQ) are disordered. Residue Ser-268 is modified to Phosphoserine. 2 C3H1-type zinc fingers span residues 280–307 (EESE…HFHL) and 281–306 (ESEQ…VHFH). 2 WWE domains span residues 308–371 (PYRW…RLST) and 374–468 (SVTK…KVCR). Cys-484 bears the ADP-ribosylcysteine mark. The region spanning 494-708 (IPDYWDPAAL…IFVALGNLFT (215 aa)) is the PARP catalytic domain. 2 positions are modified to ADP-ribosyl aspartic acid: Asp-610 and Asp-621.

Belongs to the ARTD/PARP family. Interacts with PARP11; this interaction plays a key role in zika virus suppression. Interacts with ISG15. Auto-mono-ADP-ribosylated. In terms of processing, phosphorylated by PRKD1.

It localises to the nucleus. The protein resides in the golgi apparatus. Its subcellular location is the trans-Golgi network. It is found in the cytoplasm. The protein localises to the stress granule. The enzyme catalyses L-aspartyl-[protein] + NAD(+) = 4-O-(ADP-D-ribosyl)-L-aspartyl-[protein] + nicotinamide. It carries out the reaction L-cysteinyl-[protein] + NAD(+) = S-(ADP-D-ribosyl)-L-cysteinyl-[protein] + nicotinamide + H(+). In terms of biological role, mono-ADP-ribosyltransferase that mediates mono-ADP-ribosylation of target proteins. Displays anti-alphavirus activity during IFN-gamma immune activation by directly ADP-ribosylating the alphaviral non-structural proteins nsP3 and nsP4. Acts as a component of the PRKD1-driven regulatory cascade that selectively controls a major branch of the basolateral transport pathway by catalyzing the MARylation of GOLGA1. Acts also as a key regulator of mitochondrial function, protein translation, and inflammation. Inhibits PINK1/Parkin-dependent mitophagy and promotes cartilage degeneration by inhibiting the ubiquitination and SUMOylation of MFN1/2 by upregulating ISG15 and ISGylation. This Mus musculus (Mouse) protein is Protein mono-ADP-ribosyltransferase PARP12.